The primary structure comprises 383 residues: Sulfate adenylyltransferase (383 aa).

The protein belongs to the sulfate adenylyltransferase family.

It carries out the reaction sulfate + ATP + H(+) = adenosine 5'-phosphosulfate + diphosphate. It functions in the pathway sulfur metabolism; hydrogen sulfide biosynthesis; sulfite from sulfate: step 1/3. The polypeptide is Sulfate adenylyltransferase (Halothermothrix orenii (strain H 168 / OCM 544 / DSM 9562)).